The sequence spans 736 residues: Polyribonucleotide nucleotidyltransferase (736 aa).

The Mg(2+) site is built by Asp-518 and Asp-524. Residues 584–644 (PSLQIFSINP…QKVEAAKEHI (61 aa)) form the KH domain. The region spanning 665-732 (GEVFKGKVKK…NKNKVELGRA (68 aa)) is the S1 motif domain.

The protein belongs to the polyribonucleotide nucleotidyltransferase family. The cofactor is Mg(2+).

Its subcellular location is the cytoplasm. The catalysed reaction is RNA(n+1) + phosphate = RNA(n) + a ribonucleoside 5'-diphosphate. In terms of biological role, involved in mRNA degradation. Catalyzes the phosphorolysis of single-stranded polyribonucleotides processively in the 3'- to 5'-direction. In Wolinella succinogenes (strain ATCC 29543 / DSM 1740 / CCUG 13145 / JCM 31913 / LMG 7466 / NCTC 11488 / FDC 602W) (Vibrio succinogenes), this protein is Polyribonucleotide nucleotidyltransferase.